Reading from the N-terminus, the 279-residue chain is Beta-lactamase (279 aa).

The N-terminal stretch at 1–21 (MRYVRLCVISLLATLPLVVYA) is a signal peptide. Ser-66 (acyl-ester intermediate) is an active-site residue. Cys-73 and Cys-119 are oxidised to a cystine. 230–232 (KTG) serves as a coordination point for substrate.

It belongs to the class-A beta-lactamase family.

The catalysed reaction is a beta-lactam + H2O = a substituted beta-amino acid. This chain is Beta-lactamase, found in Klebsiella pneumoniae.